We begin with the raw amino-acid sequence, 570 residues long: Glycine--tRNA ligase (570 aa).

Arginine 95 and glutamate 159 together coordinate substrate. Residues 191–193, 201–206, 312–313, and 426–429 contribute to the ATP site; these read RNE, IRLREF, EV, and GLDR. 206 to 210 provides a ligand contact to substrate; that stretch reads FNQAE. 422–426 is a binding site for substrate; it reads EPSFG.

Belongs to the class-II aminoacyl-tRNA synthetase family.

It is found in the cytoplasm. The enzyme catalyses tRNA(Gly) + glycine + ATP = glycyl-tRNA(Gly) + AMP + diphosphate. Functionally, catalyzes the attachment of glycine to tRNA(Gly). This is Glycine--tRNA ligase from Archaeoglobus fulgidus (strain ATCC 49558 / DSM 4304 / JCM 9628 / NBRC 100126 / VC-16).